A 158-amino-acid chain; its full sequence is Cyclic pyranopterin monophosphate synthase (158 aa).

Residues 75–77 and 113–114 contribute to the substrate site; these read LCH and ME. Aspartate 128 is a catalytic residue.

The protein belongs to the MoaC family. In terms of assembly, homohexamer; trimer of dimers.

It catalyses the reaction (8S)-3',8-cyclo-7,8-dihydroguanosine 5'-triphosphate = cyclic pyranopterin phosphate + diphosphate. The protein operates within cofactor biosynthesis; molybdopterin biosynthesis. Its function is as follows. Catalyzes the conversion of (8S)-3',8-cyclo-7,8-dihydroguanosine 5'-triphosphate to cyclic pyranopterin monophosphate (cPMP). The sequence is that of Cyclic pyranopterin monophosphate synthase from Actinobacillus pleuropneumoniae serotype 5b (strain L20).